A 180-amino-acid chain; its full sequence is Calcium-binding protein E (180 aa).

EF-hand domains are found at residues 3 to 38 (KVEA…NSNI), 40 to 76 (DPLA…KKIK), 85 to 120 (ALRS…DPDF), and 139 to 174 (RAKS…HPEF). Residues Asp16, Asp18, Asp20, Asn22, and Glu27 each coordinate Ca(2+). Positions 98, 100, 102, 109, 152, 154, 156, 158, and 163 each coordinate Ca(2+).

The sequence is that of Calcium-binding protein E (cbpE) from Dictyostelium discoideum (Social amoeba).